The following is a 349-amino-acid chain: Putative methylesterase 12, chloroplastic (349 aa).

A chloroplast-targeting transit peptide spans 1–77 (MGNRVICMKK…GSTSSRRGTL (77 aa)). The interval 61-80 (GSMSRRIGSTSSRRGTLSDS) is disordered. Residue Ser173 is the Acyl-ester intermediate of the active site. Catalysis depends on charge relay system residues Asp300 and His328.

The protein belongs to the AB hydrolase superfamily. Methylesterase family.

The protein resides in the plastid. The protein localises to the chloroplast. In terms of biological role, putative methylesterase. The protein is Putative methylesterase 12, chloroplastic of Arabidopsis thaliana (Mouse-ear cress).